A 639-amino-acid chain; its full sequence is Ubiquitin-like modifier-activating enzyme ATG7 (639 aa).

Positions 322–327 (GAGTLG) match the GXGXXG motif motif. The active-site Glycyl thioester intermediate is Cys-502.

The protein belongs to the ATG7 family. In terms of assembly, homodimer.

It localises to the cytoplasm. It is found in the preautophagosomal structure. E1-like activating enzyme involved in the 2 ubiquitin-like systems required for cytoplasm to vacuole transport (Cvt) and autophagy. Activates ATG12 for its conjugation with ATG5 and ATG8 for its conjugation with phosphatidylethanolamine. Both systems are needed for the ATG8 association to Cvt vesicles and autophagosomes membranes. Autophagy is essential for maintenance of amino acid levels and protein synthesis under nitrogen starvation. Required for selective autophagic degradation of the nucleus (nucleophagy) as well as for mitophagy which contributes to regulate mitochondrial quantity and quality by eliminating the mitochondria to a basal level to fulfill cellular energy requirements and preventing excess ROS production. Plays a role in the regulation of filamentous growth and chronological longevity. This is Ubiquitin-like modifier-activating enzyme ATG7 (APG7) from Candida albicans (strain SC5314 / ATCC MYA-2876) (Yeast).